The chain runs to 197 residues: Putative glutathione-dependent formaldehyde-activating enzyme (197 aa).

One can recognise a CENP-V/GFA domain in the interval 22–171 (FPGGKLYCHC…LKSLGLENYD (150 aa)). 7 residues coordinate Zn(2+): cysteine 29, cysteine 31, cysteine 50, cysteine 52, cysteine 55, cysteine 97, and cysteine 100.

Belongs to the Gfa family. The cofactor is Zn(2+).

It carries out the reaction S-(hydroxymethyl)glutathione = glutathione + formaldehyde. The protein operates within one-carbon metabolism; formaldehyde degradation; formate from formaldehyde (glutathione route): step 1/3. Its function is as follows. Catalyzes the condensation of formaldehyde and glutathione to S-hydroxymethylglutathione. The protein is Putative glutathione-dependent formaldehyde-activating enzyme of Emericella nidulans (strain FGSC A4 / ATCC 38163 / CBS 112.46 / NRRL 194 / M139) (Aspergillus nidulans).